We begin with the raw amino-acid sequence, 314 residues long: Malate dehydrogenase (314 aa).

Residues 11 to 16 (GSGNIG) and Asp-35 each bind NAD(+). Residues Arg-84 and Arg-90 each contribute to the substrate site. NAD(+)-binding positions include Asn-97 and 120–122 (ITN). Substrate contacts are provided by Asn-122 and Arg-153. The active-site Proton acceptor is the His-177.

It belongs to the LDH/MDH superfamily. MDH type 3 family.

It catalyses the reaction (S)-malate + NAD(+) = oxaloacetate + NADH + H(+). In terms of biological role, catalyzes the reversible oxidation of malate to oxaloacetate. The sequence is that of Malate dehydrogenase from Rickettsia bellii (strain OSU 85-389).